The primary structure comprises 359 residues: Guanine nucleotide-binding protein-like alpha-11 subunit (359 aa).

A lipid anchor (N-myristoyl glycine) is attached at Gly2. Positions 29–359 (KLIKILMMGN…YVKKILEDTI (331 aa)) constitute a G-alpha domain. The interval 32-45 (KILMMGNENSAKST) is G1 motif. Residue Ser44 participates in Mg(2+) binding. A G2 motif region spans residues 176 to 185 (DIIRCSKNNQ). Residues 178–185 (IRCSKNNQ), 204–208 (DTGNQ), and 281–284 (NKKE) each bind GTP. A G3 motif region spans residues 200–209 (FVFVDTGNQK). The interval 277 to 284 (IVLFNKKE) is G4 motif. The G5 motif stretch occupies residues 337 to 342 (FNSSDT).

Belongs to the G-alpha family.

This Dictyostelium discoideum (Social amoeba) protein is Guanine nucleotide-binding protein-like alpha-11 subunit (gpaK).